We begin with the raw amino-acid sequence, 550 residues long: Dihydroxy-acid dehydratase (550 aa).

Mg(2+) is bound at residue Asp78. Cys119 is a [2Fe-2S] cluster binding site. Asp120 and Lys121 together coordinate Mg(2+). N6-carboxylysine is present on Lys121. Residue Cys191 participates in [2Fe-2S] cluster binding. Glu440 is a binding site for Mg(2+). Ser466 functions as the Proton acceptor in the catalytic mechanism.

This sequence belongs to the IlvD/Edd family. In terms of assembly, homodimer. [2Fe-2S] cluster serves as cofactor. Requires Mg(2+) as cofactor.

The enzyme catalyses (2R)-2,3-dihydroxy-3-methylbutanoate = 3-methyl-2-oxobutanoate + H2O. The catalysed reaction is (2R,3R)-2,3-dihydroxy-3-methylpentanoate = (S)-3-methyl-2-oxopentanoate + H2O. It functions in the pathway amino-acid biosynthesis; L-isoleucine biosynthesis; L-isoleucine from 2-oxobutanoate: step 3/4. Its pathway is amino-acid biosynthesis; L-valine biosynthesis; L-valine from pyruvate: step 3/4. Functionally, functions in the biosynthesis of branched-chain amino acids. Catalyzes the dehydration of (2R,3R)-2,3-dihydroxy-3-methylpentanoate (2,3-dihydroxy-3-methylvalerate) into 2-oxo-3-methylpentanoate (2-oxo-3-methylvalerate) and of (2R)-2,3-dihydroxy-3-methylbutanoate (2,3-dihydroxyisovalerate) into 2-oxo-3-methylbutanoate (2-oxoisovalerate), the penultimate precursor to L-isoleucine and L-valine, respectively. In Methanococcus maripaludis (strain C5 / ATCC BAA-1333), this protein is Dihydroxy-acid dehydratase.